We begin with the raw amino-acid sequence, 131 residues long: Small ribosomal subunit protein uS9 (131 aa).

This sequence belongs to the universal ribosomal protein uS9 family.

In Mesoplasma florum (strain ATCC 33453 / NBRC 100688 / NCTC 11704 / L1) (Acholeplasma florum), this protein is Small ribosomal subunit protein uS9.